A 251-amino-acid polypeptide reads, in one-letter code: Ditrans,polycis-undecaprenyl-diphosphate synthase ((2E,6E)-farnesyl-diphosphate specific) (251 aa).

Aspartate 21 is a catalytic residue. Aspartate 21 serves as a coordination point for Mg(2+). Substrate contacts are provided by residues 22-25 (GNNR), tryptophan 26, histidine 38, and 66-68 (SSE). Asparagine 69 (proton acceptor) is an active-site residue. Substrate is bound by residues tryptophan 70, arginine 72, arginine 189, and 195-197 (RIS). Residue glutamate 208 coordinates Mg(2+).

It belongs to the UPP synthase family. As to quaternary structure, homodimer. Mg(2+) is required as a cofactor.

The catalysed reaction is 8 isopentenyl diphosphate + (2E,6E)-farnesyl diphosphate = di-trans,octa-cis-undecaprenyl diphosphate + 8 diphosphate. Catalyzes the sequential condensation of isopentenyl diphosphate (IPP) with (2E,6E)-farnesyl diphosphate (E,E-FPP) to yield (2Z,6Z,10Z,14Z,18Z,22Z,26Z,30Z,34E,38E)-undecaprenyl diphosphate (di-trans,octa-cis-UPP). UPP is the precursor of glycosyl carrier lipid in the biosynthesis of bacterial cell wall polysaccharide components such as peptidoglycan and lipopolysaccharide. The polypeptide is Ditrans,polycis-undecaprenyl-diphosphate synthase ((2E,6E)-farnesyl-diphosphate specific) (Pseudomonas syringae pv. tomato (strain ATCC BAA-871 / DC3000)).